A 557-amino-acid polypeptide reads, in one-letter code: Kelch repeat and BTB domain-containing protein 2 (557 aa).

One can recognise a BTB domain in the interval 26 to 95; that stretch reads CDVIITIGDG…LYNRHISSMN (70 aa). The 91-residue stretch at 133–223 folds into the BACK domain; sequence HKLYEMVHIP…CIDIQNLDKK (91 aa). Kelch repeat units lie at residues 305–352, 353–399, and 401–464; these read EIII…VIDD, TIYA…VLDQ, and IYII…SHKD.

Interacts (via BTB domain) with host CUL3.

The protein resides in the host cytoplasm. Functionally, probable substrate-specific adapter of CUL3-containing E3 ubiquitin-protein ligases which mediate the ubiquitination and subsequent proteasomal degradation of host target proteins. The protein is Kelch repeat and BTB domain-containing protein 2 (KBTB2) of Bos taurus (Bovine).